Here is a 152-residue protein sequence, read N- to C-terminus: Ribosome maturation factor RimP (152 aa).

The protein belongs to the RimP family.

It is found in the cytoplasm. In terms of biological role, required for maturation of 30S ribosomal subunits. The chain is Ribosome maturation factor RimP from Rubrobacter xylanophilus (strain DSM 9941 / JCM 11954 / NBRC 16129 / PRD-1).